We begin with the raw amino-acid sequence, 172 residues long: Putative acetyltransferase YvoF (172 aa).

It belongs to the transferase hexapeptide repeat family.

The chain is Putative acetyltransferase YvoF (yvoF) from Bacillus subtilis (strain 168).